The chain runs to 316 residues: BRCA2 and CDKN1A-interacting protein (316 aa).

Residues 1–57 (MASKAKKRAVGNGIQRPLGAPGQREEEEEEEDEVEDEEEDEDDSDEEEDEVDEIVDE) are disordered. The span at 25–57 (EEEEEEEDEVEDEEEDEDDSDEEEDEVDEIVDE) shows a compositional bias: acidic residues. Phosphoserine is present on residues Ser44 and Ser114. Positions 61 to 169 (IEFEAYSISD…EQSMVEQLDK (109 aa)) are interaction with BRCA2. The interaction with CDKN1A stretch occupies residues 163–261 (MVEQLDKLLN…NAEEEFFYEK (99 aa)). Ser283 is subject to Phosphoserine.

Belongs to the BCP1 family. Interacts with BRCA2, CDKN1A and MTDH/LYRIC. Interacts with DCTN1/p150-glued and ACTR1A/ARP1. Interacts with alpha-, beta- and gamma-tubulins. Interacts with TENT5C; the interaction has no effect on TENT5C poly(A) polymerase function. As to expression, expressed in the testes (at protein level).

The protein resides in the nucleus. The protein localises to the cytoplasm. Its subcellular location is the cytoskeleton. It localises to the microtubule organizing center. It is found in the centrosome. The protein resides in the centriole. The protein localises to the spindle pole. Its function is as follows. During interphase, required for microtubule organizing and anchoring activities. During mitosis, required for the organization and stabilization of the spindle pole. May promote cell cycle arrest by enhancing the inhibition of CDK2 activity by CDKN1A. May be required for repair of DNA damage by homologous recombination in conjunction with BRCA2. May not be involved in non-homologous end joining (NHEJ). The protein is BRCA2 and CDKN1A-interacting protein (Bccip) of Mus musculus (Mouse).